The sequence spans 130 residues: Small ribosomal subunit protein uS8 (130 aa).

The protein belongs to the universal ribosomal protein uS8 family. Part of the 30S ribosomal subunit. Contacts proteins S5 and S12.

One of the primary rRNA binding proteins, it binds directly to 16S rRNA central domain where it helps coordinate assembly of the platform of the 30S subunit. The chain is Small ribosomal subunit protein uS8 from Pseudomonas syringae pv. tomato (strain ATCC BAA-871 / DC3000).